Here is a 513-residue protein sequence, read N- to C-terminus: Putative BTB/POZ domain-containing protein L55 (513 aa).

One can recognise a BTB domain in the interval 11–83; that stretch reads SPIKIILQDI…FHGYKMEISD (73 aa).

The protein belongs to the mimivirus BTB/WD family.

The protein is Putative BTB/POZ domain-containing protein L55 of Acanthamoeba polyphaga (Amoeba).